Here is a 420-residue protein sequence, read N- to C-terminus: Gamma-glutamyl phosphate reductase (420 aa).

Belongs to the gamma-glutamyl phosphate reductase family.

It is found in the cytoplasm. It carries out the reaction L-glutamate 5-semialdehyde + phosphate + NADP(+) = L-glutamyl 5-phosphate + NADPH + H(+). Its pathway is amino-acid biosynthesis; L-proline biosynthesis; L-glutamate 5-semialdehyde from L-glutamate: step 2/2. Its function is as follows. Catalyzes the NADPH-dependent reduction of L-glutamate 5-phosphate into L-glutamate 5-semialdehyde and phosphate. The product spontaneously undergoes cyclization to form 1-pyrroline-5-carboxylate. The sequence is that of Gamma-glutamyl phosphate reductase from Laribacter hongkongensis (strain HLHK9).